Here is a 400-residue protein sequence, read N- to C-terminus: Phosphoribosylamine--glycine ligase (400 aa).

The 205-residue stretch at 99 to 303 (KRFMKKYGIR…FVNAVLEGYR (205 aa)) folds into the ATP-grasp domain. An ATP-binding site is contributed by 125–186 (IKKFSPPYVI…DEFLAGNELS (62 aa)). Mg(2+) contacts are provided by Glu273 and Asn275.

Belongs to the GARS family. It depends on Mg(2+) as a cofactor. Mn(2+) is required as a cofactor.

The catalysed reaction is 5-phospho-beta-D-ribosylamine + glycine + ATP = N(1)-(5-phospho-beta-D-ribosyl)glycinamide + ADP + phosphate + H(+). Its pathway is purine metabolism; IMP biosynthesis via de novo pathway; N(1)-(5-phospho-D-ribosyl)glycinamide from 5-phospho-alpha-D-ribose 1-diphosphate: step 2/2. This chain is Phosphoribosylamine--glycine ligase, found in Thermotoga maritima (strain ATCC 43589 / DSM 3109 / JCM 10099 / NBRC 100826 / MSB8).